The chain runs to 372 residues: Saccharopine dehydrogenase [NAD(+), L-lysine-forming] (372 aa).

Positions 18 and 77 each coordinate L-saccharopine. K77 functions as the Proton acceptor in the catalytic mechanism. H95 serves as the catalytic Proton donor. L-saccharopine is bound at residue Q100. R129 contributes to the NAD(+) binding site. R130 and F134 together coordinate L-saccharopine. NAD(+) contacts are provided by residues 200–201 (GR), D224, T228, Y248, and V275. Residues C202 and C246 are joined by a disulfide bond. 276–278 (SAD) lines the L-saccharopine pocket. An NAD(+)-binding site is contributed by 316-319 (IDHL).

Belongs to the AlaDH/PNT family. Monomer.

It catalyses the reaction L-saccharopine + NAD(+) + H2O = L-lysine + 2-oxoglutarate + NADH + H(+). Its pathway is amino-acid biosynthesis; L-lysine biosynthesis via AAA pathway; L-lysine from L-alpha-aminoadipate (fungal route): step 3/3. Catalyzes the NAD(+)-dependent cleavage of saccharopine to L-lysine and 2-oxoglutarate, the final step in the alpha-aminoadipate (AAA) pathway for lysin biosynthesis. This Neurospora crassa (strain ATCC 24698 / 74-OR23-1A / CBS 708.71 / DSM 1257 / FGSC 987) protein is Saccharopine dehydrogenase [NAD(+), L-lysine-forming] (lys-4).